A 453-amino-acid chain; its full sequence is Pup--protein ligase (453 aa).

Glu9 provides a ligand contact to Mg(2+). Arg53 contacts ATP. Mg(2+) is bound at residue Tyr55. The active-site Proton acceptor is Asp57. Glu63 lines the Mg(2+) pocket. ATP-binding residues include Thr66 and Trp420.

This sequence belongs to the Pup ligase/Pup deamidase family. Pup-conjugating enzyme subfamily.

The enzyme catalyses ATP + [prokaryotic ubiquitin-like protein]-L-glutamate + [protein]-L-lysine = ADP + phosphate + N(6)-([prokaryotic ubiquitin-like protein]-gamma-L-glutamyl)-[protein]-L-lysine.. It participates in protein degradation; proteasomal Pup-dependent pathway. The protein operates within protein modification; protein pupylation. Its function is as follows. Catalyzes the covalent attachment of the prokaryotic ubiquitin-like protein modifier Pup to the proteasomal substrate proteins, thereby targeting them for proteasomal degradation. This tagging system is termed pupylation. The ligation reaction involves the side-chain carboxylate of the C-terminal glutamate of Pup and the side-chain amino group of a substrate lysine. In Streptomyces coelicolor (strain ATCC BAA-471 / A3(2) / M145), this protein is Pup--protein ligase.